Here is a 123-residue protein sequence, read N- to C-terminus: UPF0102 protein DR_2282 (123 aa).

It belongs to the UPF0102 family.

The sequence is that of UPF0102 protein DR_2282 from Deinococcus radiodurans (strain ATCC 13939 / DSM 20539 / JCM 16871 / CCUG 27074 / LMG 4051 / NBRC 15346 / NCIMB 9279 / VKM B-1422 / R1).